The chain runs to 614 residues: RNA polymerase sigma factor RpoD (614 aa).

Residues 168–245 (DPDDNIAAPT…PEEKRSYPQG (78 aa)) are disordered. Residues 193 to 209 (EADDDEEESEGGDDEEE) show a composition bias toward acidic residues. A compositionally biased stretch (polar residues) spans 215 to 232 (TRSSQPSVSVRYPSSFSD). The interval 380 to 450 (MVEANLRLVI…TRSIADQART (71 aa)) is sigma-70 factor domain-2. The short motif at 404–407 (DLIQ) is the Interaction with polymerase core subunit RpoC element. The sigma-70 factor domain-3 stretch occupies residues 459–535 (ETINKLNRIS…DSTMQSPIYV (77 aa)). The sigma-70 factor domain-4 stretch occupies residues 548 to 601 (VLSGLTAREAKVLRMRFGIDMNTDHTLEEVGKQFDVTRERIRQIEAKAWRKLRH). Residues 574–593 (LEEVGKQFDVTRERIRQIEA) constitute a DNA-binding region (H-T-H motif).

Belongs to the sigma-70 factor family. RpoD/SigA subfamily. Interacts transiently with the RNA polymerase catalytic core.

It localises to the cytoplasm. Its function is as follows. Sigma factors are initiation factors that promote the attachment of RNA polymerase to specific initiation sites and are then released. This sigma factor is the primary sigma factor during exponential growth. This is RNA polymerase sigma factor RpoD from Pseudomonas putida (Arthrobacter siderocapsulatus).